The following is a 330-amino-acid chain: MKKTVLSGVQTTGALHLGNYLGSIRNWIKMQEEYNCFFFLADLHAITIDIKTSELNDAIMEVLAIYLAAGLNPDKVTIFAQSMVKEHVELSWLLNCVTPLGWLKRMTQFKDKAGSAQCKACLGLFAYPILMAADILIYKADIVPVGEDQKQHLELTRDIAEVINRRFDKEILKVPDILISETGTRIMSLRNGLKKMSKSDISDFSRINLKDSNDLIHQKIKKAKTDHLSFISYNKKTRPEISNLLDIYKSFSKESIEKIIDNYQNQGFAKFKEDLAEIIITNLQPIRNKCLELMNDKEYLLKILHKGAQKARIRASETVNEVKKQFGFII.

ATP contacts are provided by residues glutamine 10 to threonine 12 and glycine 18 to asparagine 19. Positions threonine 11–asparagine 19 match the 'HIGH' region motif. Residue aspartate 134 coordinates L-tryptophan. ATP-binding positions include glycine 146 to aspartate 148, isoleucine 186, and lysine 195 to serine 199. Residues lysine 195–serine 199 carry the 'KMSKS' region motif.

It belongs to the class-I aminoacyl-tRNA synthetase family. As to quaternary structure, homodimer.

It localises to the cytoplasm. The catalysed reaction is tRNA(Trp) + L-tryptophan + ATP = L-tryptophyl-tRNA(Trp) + AMP + diphosphate + H(+). In terms of biological role, catalyzes the attachment of tryptophan to tRNA(Trp). This is Tryptophan--tRNA ligase from Rickettsia prowazekii (strain Madrid E).